The sequence spans 605 residues: Kelch-like protein 41b (605 aa).

The BTB domain occupies 32-102 (VDCTLKIGDR…YSAEIDLVDD (71 aa)). The 103-residue stretch at 136-238 (CLAVFRLGLV…PEKYFREKVE (103 aa)) folds into the BACK domain. Kelch repeat units follow at residues 345-397 (QLFI…ESEN), 398-446 (LLFA…SHNN), 447-494 (LVYC…VHKG), 496-541 (IIVT…SSGG), and 543-598 (LFSI…MRLN).

It localises to the cytoplasm. Its subcellular location is the cytoskeleton. It is found in the sarcoplasmic reticulum membrane. The protein localises to the endoplasmic reticulum membrane. Its function is as follows. Involved in skeletal muscle development and maintenance. The sequence is that of Kelch-like protein 41b from Danio rerio (Zebrafish).